We begin with the raw amino-acid sequence, 30 residues long: Cycloviolacin-O18 (30 aa).

A cross-link (cyclopeptide (Gly-Asn)) is located at residues 1-30; that stretch reads GIPCGESCVYIPCTVTALAGCKCKSKVCYN. 3 disulfide bridges follow: Cys-4/Cys-21, Cys-8/Cys-23, and Cys-13/Cys-28.

In terms of processing, this is a cyclic peptide. As to expression, expressed in leaves, petals and petioles but not in roots and runners (at protein level).

In terms of biological role, probably participates in a plant defense mechanism. In Viola odorata (Sweet violet), this protein is Cycloviolacin-O18.